The sequence spans 437 residues: Adenosylhomocysteinase (437 aa).

Residues Thr-54, Asp-125, and Glu-170 each coordinate substrate. Position 171–173 (171–173) interacts with NAD(+); sequence TTT. Residues Lys-200 and Asp-204 each coordinate substrate. NAD(+) is bound by residues Asn-205, 234-239, Glu-258, Asn-293, 314-316, and Asn-361; these read GYGWVG and AGH.

This sequence belongs to the adenosylhomocysteinase family. NAD(+) is required as a cofactor.

The protein resides in the cytoplasm. It catalyses the reaction S-adenosyl-L-homocysteine + H2O = L-homocysteine + adenosine. It functions in the pathway amino-acid biosynthesis; L-homocysteine biosynthesis; L-homocysteine from S-adenosyl-L-homocysteine: step 1/1. In terms of biological role, may play a key role in the regulation of the intracellular concentration of adenosylhomocysteine. In Pyrobaculum aerophilum (strain ATCC 51768 / DSM 7523 / JCM 9630 / CIP 104966 / NBRC 100827 / IM2), this protein is Adenosylhomocysteinase.